A 218-amino-acid polypeptide reads, in one-letter code: DNA endonuclease I-ChuI (218 aa).

The protein belongs to the LAGLIDADG endonuclease family.

The protein resides in the plastid. Its subcellular location is the chloroplast. Probable endonuclease involved in intron homing. Encoded in the group-I intron of the subunit rRNA-encoding gene (rrnL), it generates a staggered cut with 4-nt (CTCG) 3'-OH overhangs 2 bp downstream from the intron insertion site. The sequence is that of DNA endonuclease I-ChuI from Chlamydomonas applanata (Chlamydomonas humicola).